The sequence spans 700 residues: Elongation factor G (700 aa).

The tr-type G domain maps to 8–290 (ERYRNIGISA…AVIDYLPSPV (283 aa)). Residues 17-24 (AHIDAGKT), 88-92 (DTPGH), and 142-145 (NKMD) each bind GTP.

It belongs to the TRAFAC class translation factor GTPase superfamily. Classic translation factor GTPase family. EF-G/EF-2 subfamily.

It localises to the cytoplasm. In terms of biological role, catalyzes the GTP-dependent ribosomal translocation step during translation elongation. During this step, the ribosome changes from the pre-translocational (PRE) to the post-translocational (POST) state as the newly formed A-site-bound peptidyl-tRNA and P-site-bound deacylated tRNA move to the P and E sites, respectively. Catalyzes the coordinated movement of the two tRNA molecules, the mRNA and conformational changes in the ribosome. The protein is Elongation factor G of Paracidovorax citrulli (strain AAC00-1) (Acidovorax citrulli).